The primary structure comprises 92 residues: Small ribosomal subunit protein bS21 (92 aa).

A disordered region spans residues 37-92; sequence QREGTFREMKRRNHYEKPSEKKARQKAEAIRRARKLARKRAQREGLIAKRGGTTRR. Residues 51-67 are compositionally biased toward basic and acidic residues; the sequence is YEKPSEKKARQKAEAIR. Basic residues predominate over residues 68–77; the sequence is RARKLARKRA.

Belongs to the bacterial ribosomal protein bS21 family.

In Maricaulis maris (strain MCS10) (Caulobacter maris), this protein is Small ribosomal subunit protein bS21.